The sequence spans 235 residues: LexA repressor (235 aa).

A DNA-binding region (H-T-H motif) is located at residues 26-46 (FDEMKEALDLASKSGIHRLIT). The segment at 72–104 (QATTAAPPKGRGAFRPQVLEGGGQAPTTSAQPQ) is disordered. Catalysis depends on for autocatalytic cleavage activity residues Ser-156 and Lys-193.

It belongs to the peptidase S24 family. In terms of assembly, homodimer.

The enzyme catalyses Hydrolysis of Ala-|-Gly bond in repressor LexA.. Represses a number of genes involved in the response to DNA damage (SOS response), including recA and lexA. In the presence of single-stranded DNA, RecA interacts with LexA causing an autocatalytic cleavage which disrupts the DNA-binding part of LexA, leading to derepression of the SOS regulon and eventually DNA repair. This is LexA repressor from Caulobacter sp. (strain K31).